The chain runs to 436 residues: 3-ketoacyl-CoA thiolase (436 aa).

Catalysis depends on C99, which acts as the Acyl-thioester intermediate. Catalysis depends on proton acceptor residues H392 and C422.

This sequence belongs to the thiolase-like superfamily. Thiolase family. In terms of assembly, heterotetramer of two alpha chains (FadJ) and two beta chains (FadI).

The protein localises to the cytoplasm. The enzyme catalyses an acyl-CoA + acetyl-CoA = a 3-oxoacyl-CoA + CoA. The protein operates within lipid metabolism; fatty acid beta-oxidation. Its function is as follows. Catalyzes the final step of fatty acid oxidation in which acetyl-CoA is released and the CoA ester of a fatty acid two carbons shorter is formed. In Citrobacter koseri (strain ATCC BAA-895 / CDC 4225-83 / SGSC4696), this protein is 3-ketoacyl-CoA thiolase.